We begin with the raw amino-acid sequence, 352 residues long: Ion-translocating oxidoreductase complex subunit D (352 aa).

Transmembrane regions (helical) follow at residues 20 to 40 (IMLLVLLAAVPGIAAQLWFFG), 42 to 62 (GTLVQILLASVSALLAEALVL), 78 to 109 (ALLTGLLLAVSIPPLAPWWMVVLGTVFAVIIA), 123 to 143 (PAMIGYVVLLISFPVQMTSWL), and 148 to 168 (IAVNIPGFIDAIQVIFSGHTA). Thr187 carries the FMN phosphoryl threonine modification. 5 helical membrane passes run 214 to 234 (ILAGAGWQWVNLAWLAGGVWL), 242 to 262 (WHIPLSFLVTLALCAMLGWLF), 267 to 287 (LAAPQIHLLSGATMLGAFFIL), 301 to 321 (LIFGALAGLLVWLIRSFGGYP), and 322 to 342 (DGVAFAVLLANITVPLIDYYT).

This sequence belongs to the NqrB/RnfD family. In terms of assembly, the complex is composed of six subunits: RsxA, RsxB, RsxC, RsxD, RsxE and RsxG. FMN serves as cofactor.

It is found in the cell inner membrane. Part of a membrane-bound complex that couples electron transfer with translocation of ions across the membrane. Required to maintain the reduced state of SoxR. Probably transfers electron from NAD(P)H to SoxR. The protein is Ion-translocating oxidoreductase complex subunit D of Escherichia coli (strain K12).